Reading from the N-terminus, the 334-residue chain is ADP-L-glycero-D-manno-heptose-6-epimerase (334 aa).

NADP(+) contacts are provided by residues 11–12 (FI), 32–33 (DN), Lys39, Lys54, 77–81 (QGACS), and Asn94. Tyr141 (proton acceptor) is an active-site residue. Lys145 lines the NADP(+) pocket. Asn171 is a binding site for substrate. Positions 172 and 180 each coordinate NADP(+). The active-site Proton acceptor is the Lys180. Residues Arg182, His189, 203–206 (FGSN), Arg216, and Tyr295 contribute to the substrate site.

The protein belongs to the NAD(P)-dependent epimerase/dehydratase family. HldD subfamily. As to quaternary structure, homopentamer. NADP(+) is required as a cofactor.

The enzyme catalyses ADP-D-glycero-beta-D-manno-heptose = ADP-L-glycero-beta-D-manno-heptose. It functions in the pathway nucleotide-sugar biosynthesis; ADP-L-glycero-beta-D-manno-heptose biosynthesis; ADP-L-glycero-beta-D-manno-heptose from D-glycero-beta-D-manno-heptose 7-phosphate: step 4/4. Its pathway is bacterial outer membrane biogenesis; LOS core biosynthesis. Catalyzes the interconversion between ADP-D-glycero-beta-D-manno-heptose and ADP-L-glycero-beta-D-manno-heptose via an epimerization at carbon 6 of the heptose. This chain is ADP-L-glycero-D-manno-heptose-6-epimerase, found in Neisseria gonorrhoeae.